Reading from the N-terminus, the 146-residue chain is Cyanate hydratase (146 aa).

Catalysis depends on residues R87, E90, and S113.

Belongs to the cyanase family.

It carries out the reaction cyanate + hydrogencarbonate + 3 H(+) = NH4(+) + 2 CO2. Catalyzes the reaction of cyanate with bicarbonate to produce ammonia and carbon dioxide. The sequence is that of Cyanate hydratase from Nostoc sp. (strain PCC 7120 / SAG 25.82 / UTEX 2576).